A 367-amino-acid chain; its full sequence is Putative isomerase YraM (367 aa).

It belongs to the PrpF family.

The chain is Putative isomerase YraM (yraM) from Bacillus subtilis (strain 168).